The chain runs to 208 residues: GTP-binding protein Rho1 (208 aa).

19–26 (GDGACGKT) serves as a coordination point for GTP. The Effector region signature appears at 41 to 49 (YVPTVFDNY). GTP is bound by residues 66–70 (DTAGQ) and 124–127 (CKAD). Residues 188–208 (GKQGKSKPKTKSSKKKKCVVL) form a disordered region. A compositionally biased stretch (basic residues) spans 191–208 (GKSKPKTKSSKKKKCVVL). Cys205 is subject to Cysteine methyl ester. Cys205 is lipidated: S-geranylgeranyl cysteine. The propeptide at 206–208 (VVL) is removed in mature form.

This sequence belongs to the small GTPase superfamily. Rho family.

The protein resides in the cell membrane. The sequence is that of GTP-binding protein Rho1 (RHO1) from Kluyveromyces lactis (strain ATCC 8585 / CBS 2359 / DSM 70799 / NBRC 1267 / NRRL Y-1140 / WM37) (Yeast).